A 163-amino-acid chain; its full sequence is Putative pre-16S rRNA nuclease (163 aa).

The protein belongs to the YqgF nuclease family.

Its subcellular location is the cytoplasm. Functionally, could be a nuclease involved in processing of the 5'-end of pre-16S rRNA. This Roseobacter denitrificans (strain ATCC 33942 / OCh 114) (Erythrobacter sp. (strain OCh 114)) protein is Putative pre-16S rRNA nuclease.